Reading from the N-terminus, the 157-residue chain is Urease accessory protein UreE (157 aa).

The protein belongs to the UreE family.

It localises to the cytoplasm. In terms of biological role, involved in urease metallocenter assembly. Binds nickel. Probably functions as a nickel donor during metallocenter assembly. This chain is Urease accessory protein UreE, found in Corynebacterium glutamicum (strain R).